We begin with the raw amino-acid sequence, 511 residues long: Zinc finger CCCH-type with G patch domain-containing protein (511 aa).

N-acetylmethionine is present on Met1. At Ser70 the chain carries Phosphoserine. Residues 92–129 (PGAPCNDSETAPGSEVQPGSTSSALEEEEEDPDLEELS) are disordered. The segment covering 98–115 (DSETAPGSEVQPGSTSSA) has biased composition (polar residues). Acidic residues predominate over residues 116 to 127 (LEEEEEDPDLEE). The C3H1-type zinc finger occupies 174–200 (KSLKPCPFFLEGKCRFKENCRFSHGQV). The segment at 266-291 (PPLRTEATESSDSDTGDASDSSYARV) is disordered. The residue at position 276 (Ser276) is a Phosphoserine. Thr280 is modified (phosphothreonine). The 47-residue stretch at 313-359 (TRGIGSKLLVKMGYEFGKGLGRHAEGRVEPIHAVVLPRGKSLDQCAE) folds into the G-patch domain. Residue Ser353 is modified to Phosphoserine. Disordered stretches follow at residues 363-393 (KKTK…PPRN) and 490-511 (AQEA…MTEF). Residues 491 to 511 (QEADLQRKQRKADTHRKMTEF) are compositionally biased toward basic and acidic residues.

In terms of assembly, interacts with CHD4/Mi-2; the interaction is direct.

The protein resides in the nucleus. Transcription repressor that specifically binds the 5'-GGAG[GA]A[GA]A-3' consensus sequence. Represses transcription by recruiting the chromatin multiprotein complex NuRD to target promoters. Negatively regulates expression of EGFR, a gene involved in cell proliferation, survival and migration. Its ability to repress genes of the EGFR pathway suggest it may act as a tumor suppressor. The polypeptide is Zinc finger CCCH-type with G patch domain-containing protein (Zgpat) (Mus musculus (Mouse)).